A 283-amino-acid polypeptide reads, in one-letter code: Thymidylate synthase (283 aa).

Residue arginine 22 coordinates dUMP. Cysteine 160 (nucleophile) is an active-site residue. DUMP contacts are provided by residues 180 to 183 (RSCD), asparagine 191, and 221 to 223 (HIY). Aspartate 183 lines the (6R)-5,10-methylene-5,6,7,8-tetrahydrofolate pocket. Serine 282 provides a ligand contact to (6R)-5,10-methylene-5,6,7,8-tetrahydrofolate.

Belongs to the thymidylate synthase family. Bacterial-type ThyA subfamily. In terms of assembly, homodimer.

It localises to the cytoplasm. It catalyses the reaction dUMP + (6R)-5,10-methylene-5,6,7,8-tetrahydrofolate = 7,8-dihydrofolate + dTMP. The protein operates within pyrimidine metabolism; dTTP biosynthesis. Its function is as follows. Catalyzes the reductive methylation of 2'-deoxyuridine-5'-monophosphate (dUMP) to 2'-deoxythymidine-5'-monophosphate (dTMP) while utilizing 5,10-methylenetetrahydrofolate (mTHF) as the methyl donor and reductant in the reaction, yielding dihydrofolate (DHF) as a by-product. This enzymatic reaction provides an intracellular de novo source of dTMP, an essential precursor for DNA biosynthesis. The polypeptide is Thymidylate synthase (Vibrio vulnificus (strain CMCP6)).